Reading from the N-terminus, the 342-residue chain is UDP-3-O-acylglucosamine N-acyltransferase (342 aa).

The active-site Proton acceptor is histidine 243.

The protein belongs to the transferase hexapeptide repeat family. LpxD subfamily. Homotrimer.

The enzyme catalyses a UDP-3-O-[(3R)-3-hydroxyacyl]-alpha-D-glucosamine + a (3R)-hydroxyacyl-[ACP] = a UDP-2-N,3-O-bis[(3R)-3-hydroxyacyl]-alpha-D-glucosamine + holo-[ACP] + H(+). It functions in the pathway bacterial outer membrane biogenesis; LPS lipid A biosynthesis. In terms of biological role, catalyzes the N-acylation of UDP-3-O-acylglucosamine using 3-hydroxyacyl-ACP as the acyl donor. Is involved in the biosynthesis of lipid A, a phosphorylated glycolipid that anchors the lipopolysaccharide to the outer membrane of the cell. This is UDP-3-O-acylglucosamine N-acyltransferase from Coxiella burnetii (strain CbuK_Q154) (Coxiella burnetii (strain Q154)).